A 69-amino-acid chain; its full sequence is DNA gyrase inhibitor YacG (69 aa).

Zn(2+)-binding residues include Cys13, Cys16, Cys32, and Cys36.

The protein belongs to the DNA gyrase inhibitor YacG family. As to quaternary structure, interacts with GyrB. Zn(2+) is required as a cofactor.

Inhibits all the catalytic activities of DNA gyrase by preventing its interaction with DNA. Acts by binding directly to the C-terminal domain of GyrB, which probably disrupts DNA binding by the gyrase. The sequence is that of DNA gyrase inhibitor YacG from Neisseria meningitidis serogroup C / serotype 2a (strain ATCC 700532 / DSM 15464 / FAM18).